The sequence spans 595 residues: FERM domain-containing protein 3 (595 aa).

Positions 32–312 (MKCTIRLLDD…ENQAFYKYAK (281 aa)) constitute an FERM domain. A helical membrane pass occupies residues 529–549 (LLVVGLGLLLFVFPLLLLLLE).

The protein resides in the membrane. Putative tumor suppressor gene that may be implicated in the origin and progression of lung cancer. The chain is FERM domain-containing protein 3 (Frmd3) from Mus musculus (Mouse).